Here is a 719-residue protein sequence, read N- to C-terminus: Aminodeoxychorismate synthase (719 aa).

The region spanning 5–199 (RTLLIDNYDS…RDLSLRAAGH (195 aa)) is the Glutamine amidotransferase type-1 domain. Cys86 functions as the Nucleophile in the catalytic mechanism. Catalysis depends on residues His173 and Glu175. The segment at 199 to 224 (HRPPHTERIPAPAPAPAPAPAPAPPA) is disordered. Positions 209–224 (APAPAPAPAPAPAPPA) are enriched in pro residues.

It in the C-terminal section; belongs to the anthranilate synthase component I family.

It catalyses the reaction chorismate + L-glutamine = 4-amino-4-deoxychorismate + L-glutamate. It functions in the pathway antibiotic biosynthesis. Functionally, involved in pristinamycin I biosynthesis. Catalyzes the biosynthesis of 4-amino-4-deoxychorismate (ADC) from chorismate and glutamine. This chain is Aminodeoxychorismate synthase, found in Streptomyces pristinaespiralis.